Consider the following 549-residue polypeptide: Probable glucomannan 4-beta-mannosyltransferase 4 (549 aa).

A helical membrane pass occupies residues 35–55 (VAPVLQFAVWACMAMSVMLVL). Residue Asp-151 is part of the active site. The substrate site is built by Asp-210 and Asp-212. Residue Asp-304 is part of the active site. 4 consecutive transmembrane segments (helical) span residues 383–403 (VVAPILTFLFYCVVIPLSVMV), 406–426 (VSIPVWGMVYIPTAITIMNAI), 497–517 (IYIPELMVAFYLLVCASYDLV), and 523–543 (YYLYIYLQAFAFIALGFGFAG).

Belongs to the glycosyltransferase 2 family. Plant cellulose synthase-like A subfamily.

The protein resides in the golgi apparatus membrane. The catalysed reaction is GDP-mannose + (glucomannan)n = GDP + (glucomannan)n+1.. In terms of biological role, probable mannan synthase which consists of a 4-beta-mannosyltransferase activity on mannan using GDP-mannose. The beta-1,4-mannan product is the backbone for galactomannan synthesis by galactomannan galactosyltransferase. Galactomannan is a noncellulosic polysaccharides of plant cell wall. The polypeptide is Probable glucomannan 4-beta-mannosyltransferase 4 (Oryza sativa subsp. japonica (Rice)).